A 408-amino-acid chain; its full sequence is Peptidase T (408 aa).

The segment at Met1–Ser28 is disordered. The span at Arg11 to Ser28 shows a compositional bias: polar residues. Position 78 (His78) interacts with Zn(2+). The active site involves Asp80. Asp140 is a binding site for Zn(2+). Residue Glu174 is the Proton acceptor of the active site. Zn(2+)-binding residues include Glu175, Asp197, and His379.

The protein belongs to the peptidase M20B family. Requires Zn(2+) as cofactor.

Its subcellular location is the cytoplasm. The catalysed reaction is Release of the N-terminal residue from a tripeptide.. Functionally, cleaves the N-terminal amino acid of tripeptides. The sequence is that of Peptidase T from Staphylococcus aureus (strain USA300 / TCH1516).